The sequence spans 248 residues: 4-hydroxy-tetrahydrodipicolinate reductase (248 aa).

NAD(+) contacts are provided by residues 9-14 (GAQGRV), 77-79 (GTT), and 104-107 (APNF). The active-site Proton donor/acceptor is H134. H135 provides a ligand contact to (S)-2,3,4,5-tetrahydrodipicolinate. K138 serves as the catalytic Proton donor. 144-145 (GT) lines the (S)-2,3,4,5-tetrahydrodipicolinate pocket. Positions 157-176 (RREAGMPTQPDATEQSLDGA) are disordered.

The protein belongs to the DapB family.

It localises to the cytoplasm. The catalysed reaction is (S)-2,3,4,5-tetrahydrodipicolinate + NAD(+) + H2O = (2S,4S)-4-hydroxy-2,3,4,5-tetrahydrodipicolinate + NADH + H(+). The enzyme catalyses (S)-2,3,4,5-tetrahydrodipicolinate + NADP(+) + H2O = (2S,4S)-4-hydroxy-2,3,4,5-tetrahydrodipicolinate + NADPH + H(+). The protein operates within amino-acid biosynthesis; L-lysine biosynthesis via DAP pathway; (S)-tetrahydrodipicolinate from L-aspartate: step 4/4. Its function is as follows. Catalyzes the conversion of 4-hydroxy-tetrahydrodipicolinate (HTPA) to tetrahydrodipicolinate. In Corynebacterium diphtheriae (strain ATCC 700971 / NCTC 13129 / Biotype gravis), this protein is 4-hydroxy-tetrahydrodipicolinate reductase.